Here is a 336-residue protein sequence, read N- to C-terminus: uncharacterized protein (336 aa).

Positions 1–33 (MGSAWPAEIRKIAKISKRLLGATVILGFGVAEA) are cleaved as a signal peptide.

This is an uncharacterized protein from Sinorhizobium fredii (strain NBRC 101917 / NGR234).